Reading from the N-terminus, the 448-residue chain is MTDHNLLPEPKKILWRVSELNRNARVILEQTFPLLWVSGEISNLKRYPSGHWYFSLKDDSAQVRCVMFRHKNLYLDWIPQEGMQVEAQALVTLYEARGEFQLTVEQLRRAGLGALFEAFERLKARLQQEGLFSPEYKQPLPRFPRQIGIITSPNTAALRDVLTTLQLRLPSIPVVIYPAPVQGEGSAAAITTALHTAAVRGECDVLILCRGGGSIEDLWAFNEEIVARAIAACPIPIVTGIGHETDFTIADFVADARAPTPTGAAQLASPDRQAILHRLQYWLHRLQQTMERHIERRMQATDLLAHRLIHPGERIRHQQMHLLQLRGRLQNAWNRQVEIRTWRIEETGRRIHSAKPDIQAGIRHQQELAARLQRAMAHRLENLQFKLRQQQQHLIHLDPKAVLARGYSIAYTARGDILHDSRQTRAGDNVRLVFASGWAKADITETGE.

It belongs to the XseA family. Heterooligomer composed of large and small subunits.

It is found in the cytoplasm. It carries out the reaction Exonucleolytic cleavage in either 5'- to 3'- or 3'- to 5'-direction to yield nucleoside 5'-phosphates.. In terms of biological role, bidirectionally degrades single-stranded DNA into large acid-insoluble oligonucleotides, which are then degraded further into small acid-soluble oligonucleotides. The sequence is that of Exodeoxyribonuclease 7 large subunit from Nitrosomonas europaea (strain ATCC 19718 / CIP 103999 / KCTC 2705 / NBRC 14298).